The sequence spans 65 residues: Large ribosomal subunit protein uL29 (65 aa).

This sequence belongs to the universal ribosomal protein uL29 family.

The protein is Large ribosomal subunit protein uL29 (rpmC) of Borreliella burgdorferi (strain ATCC 35210 / DSM 4680 / CIP 102532 / B31) (Borrelia burgdorferi).